A 1041-amino-acid polypeptide reads, in one-letter code: Nuclear pore complex protein NUP98A (1041 aa).

The segment covering 1 to 34 (MFGSSNPFGQSSGTSPFGSQSLFGQTSNTSSNNP) has biased composition (polar residues). The tract at residues 1–44 (MFGSSNPFGQSSGTSPFGSQSLFGQTSNTSSNNPFAPATPFGTS) is disordered. A run of 44 repeats spans residues 2 to 3 (FG), 8 to 9 (FG), 17 to 18 (FG), 23 to 24 (FG), 41 to 42 (FG), 56 to 57 (FG), 64 to 65 (FG), 79 to 80 (FG), 87 to 88 (FG), 94 to 95 (FG), 103 to 104 (FG), 109 to 110 (FG), 124 to 125 (FG), 135 to 136 (FG), 140 to 141 (FG), 146 to 147 (FG), 154 to 155 (FG), 162 to 163 (FG), 170 to 171 (FG), 178 to 179 (FG), 186 to 187 (FG), 194 to 195 (FG), 202 to 203 (FG), 210 to 211 (FG), 217 to 218 (FG), 222 to 223 (FG), 228 to 229 (FG), 236 to 237 (FG), 244 to 245 (FG), 252 to 253 (FG), 260 to 261 (FG), 268 to 269 (FG), 276 to 277 (FG), 284 to 285 (FG), 294 to 295 (FG), 300 to 301 (FG), 307 to 308 (FG), 312 to 313 (FG), 319 to 320 (FG), 329 to 330 (FG), 334 to 335 (FG), 339 to 340 (FG), 411 to 412 (FG), and 427 to 428 (FG). The interval 2–677 (FGSSNPFGQS…QPVAVTNPFG (676 aa)) is 65 X 2 AA repeats of F-G. The segment at 98–171 (PASSPFGGSS…FGATSTPSFG (74 aa)) is disordered. Over residues 117–171 (STPQSNPFGNSTQQSQPAFGNTSFGSSTPFGATNTPAFGAPSTPSFGATSTPSFG) the composition is skewed to polar residues. Disordered stretches follow at residues 315 to 347 (TPSPFGGAQASTPTFGGSGFGQSTFGGQQGGSR) and 392 to 447 (QRGD…TNPF). The span at 430–447 (TSANPTNPFSSSTSTNPF) shows a compositional bias: low complexity. 21 tandem repeats follow at residues 459-460 (FG), 466-467 (FG), 471-472 (FG), 480-481 (FG), 491-492 (FG), 497-498 (FG), 506-507 (FG), 514-515 (FG), 521-522 (FG), 533-534 (FG), 555-556 (FG), 562-563 (FG), 565-566 (FG), 573-574 (FG), 586-587 (FG), 604-605 (FG), 627-628 (FG), 632-633 (FG), 650-651 (FG), 655-656 (FG), and 676-677 (FG). A compositionally biased stretch (low complexity) spans 517–526 (SSSIFGSAPG). Residues 517-560 (SSSIFGSAPGQGATPAFGNSQPSTLFNSTPSTGQTGSAFGQTGS) are disordered. Positions 533 to 560 (FGNSQPSTLFNSTPSTGQTGSAFGQTGS) are enriched in polar residues. Residues 734–860 (KYRPGENGPK…KERPYKTLSG (127 aa)) form a disordered region. Basic and acidic residues predominate over residues 782–793 (SRDKSILPKEQR). A compositionally biased stretch (polar residues) spans 831–846 (TSVNANQKPNGTTRSD). The 143-residue stretch at 885 to 1027 (QSDYFTEPRI…GEWKFRVEHF (143 aa)) folds into the Peptidase S59 domain.

It belongs to the nucleoporin GLFG family. In terms of assembly, part of the nuclear pore complex (NPC). The NPC has an eight-fold symmetrical structure comprising a central transport channel and two rings, the cytoplasmic and nuclear rings, to which eight filaments are attached. The cytoplasmic filaments have loose ends, while the nuclear filaments are joined in a distal ring, forming a nuclear basket. NPCs are highly dynamic in configuration and composition, and can be devided in 3 subcomplexes, the NUP62 subcomplex, the NUP107-160 subcomplex and the NUP93 subcomplex, containing approximately 30 different nucleoporin proteins.

Its subcellular location is the nucleus. It localises to the nuclear pore complex. This Arabidopsis thaliana (Mouse-ear cress) protein is Nuclear pore complex protein NUP98A.